The following is a 491-amino-acid chain: MDIRGINTPFLDWTGDALALGIFEEGTQITGELSQLDGKLTGTVQELIQEAEFEGKAGTKAVTRVGSNSPIRKVMLVGLGKAEDLQLNSVREAAGAIARLAKLEKVKTLGINLPVVNNDGAKTASAIAEGILLALHQDNRFKSDPQENALKLENVDILGCGEATEAINRAQTLSSGVILARELVNSPANTITPVTFAETAQEIAQTSGLTCEILEQEDCEKLGMGSFLGVAKASDLPPKFIHLTYKPSGTPKKKLAIVGKSLTFDCGGLNLKVAGASIEMMKMDMGGGAATLGAAKVIGQLKPDVEVHFICAATENMISGRAIHPGDILTASNGKTIEVNNTDAEGRLTLADALVFAEKLEVDAIVDLATLTGACIIALGDNISGLWSTDQTLADQLKAAAETAGEKFWQMPLEEKYFEGLKSPIADMKNTGPRAGGSITAALFLKQFIKDTPWAHLDIAGPVWAEKENGLNNVGGTGFPVRTLVNWVLSF.

2 residues coordinate Mn(2+): Lys260 and Asp265. Residue Lys272 is part of the active site. Mn(2+) is bound by residues Asp284, Asp343, and Glu345. The active site involves Arg347.

It belongs to the peptidase M17 family. Mn(2+) is required as a cofactor.

The protein localises to the cytoplasm. The enzyme catalyses Release of an N-terminal amino acid, Xaa-|-Yaa-, in which Xaa is preferably Leu, but may be other amino acids including Pro although not Arg or Lys, and Yaa may be Pro. Amino acid amides and methyl esters are also readily hydrolyzed, but rates on arylamides are exceedingly low.. It catalyses the reaction Release of an N-terminal amino acid, preferentially leucine, but not glutamic or aspartic acids.. Presumably involved in the processing and regular turnover of intracellular proteins. Catalyzes the removal of unsubstituted N-terminal amino acids from various peptides. The protein is Probable cytosol aminopeptidase of Rippkaea orientalis (strain PCC 8801 / RF-1) (Cyanothece sp. (strain PCC 8801)).